The primary structure comprises 76 residues: Small ribosomal subunit protein bS18 (76 aa).

This sequence belongs to the bacterial ribosomal protein bS18 family. Part of the 30S ribosomal subunit. Forms a tight heterodimer with protein bS6.

Its function is as follows. Binds as a heterodimer with protein bS6 to the central domain of the 16S rRNA, where it helps stabilize the platform of the 30S subunit. This is Small ribosomal subunit protein bS18 from Alcanivorax borkumensis (strain ATCC 700651 / DSM 11573 / NCIMB 13689 / SK2).